Here is a 33-residue protein sequence, read N- to C-terminus: Phosphoglycerate kinase (33 aa).

K13 serves as a coordination point for AMP. K13 serves as a coordination point for ATP.

This sequence belongs to the phosphoglycerate kinase family. As to quaternary structure, monomer. The cofactor is Mg(2+).

It carries out the reaction (2R)-3-phosphoglycerate + ATP = (2R)-3-phospho-glyceroyl phosphate + ADP. In Pseudotsuga menziesii (Douglas-fir), this protein is Phosphoglycerate kinase.